Consider the following 171-residue polypeptide: MLKKPSSLEQWEILGTSSGEFRCISRDCPGAGNNNREPSISTRGRTSSSKMVLPHPKVAEEAVGGPQSCKWLSCGLQGTGGGHLEGHPPRVSQESAPAGHTGISPSSSGVHLIQAKTAGWPQRVSSAEQCLLPIQHVPGADFLHVFTLRLHCGPARNAKLVEALFNSNSSC.

2 disordered regions span residues 27 to 53 (DCPGAGNNNREPSISTRGRTSSSKMVL) and 82 to 108 (GHLEGHPPRVSQESAPAGHTGISPSSS). Polar residues predominate over residues 32–50 (GNNNREPSISTRGRTSSSK).

This is an uncharacterized protein from Homo sapiens (Human).